Consider the following 157-residue polypeptide: Large ribosomal subunit protein bL20 (157 aa).

A disordered region spans residues Thr-121 to Lys-157. Residues Ser-122–Ala-134 are compositionally biased toward low complexity. Positions Lys-135 to Ala-147 are enriched in basic residues.

It belongs to the bacterial ribosomal protein bL20 family.

Its function is as follows. Binds directly to 23S ribosomal RNA and is necessary for the in vitro assembly process of the 50S ribosomal subunit. It is not involved in the protein synthesizing functions of that subunit. The protein is Large ribosomal subunit protein bL20 (rplT) of Arthrobacter sp. (strain FB24).